The following is a 217-amino-acid chain: Thiamine-phosphate synthase (217 aa).

4-amino-2-methyl-5-(diphosphooxymethyl)pyrimidine is bound by residues 39–43 (QLRRK) and Asn-71. Residues Asp-72 and Asp-91 each contribute to the Mg(2+) site. Ser-110 provides a ligand contact to 4-amino-2-methyl-5-(diphosphooxymethyl)pyrimidine. 137-139 (SPT) serves as a coordination point for 2-[(2R,5Z)-2-carboxy-4-methylthiazol-5(2H)-ylidene]ethyl phosphate. Lys-140 lines the 4-amino-2-methyl-5-(diphosphooxymethyl)pyrimidine pocket. 2-[(2R,5Z)-2-carboxy-4-methylthiazol-5(2H)-ylidene]ethyl phosphate-binding positions include Gly-173 and 193–194 (IS).

This sequence belongs to the thiamine-phosphate synthase family. Requires Mg(2+) as cofactor.

The enzyme catalyses 2-[(2R,5Z)-2-carboxy-4-methylthiazol-5(2H)-ylidene]ethyl phosphate + 4-amino-2-methyl-5-(diphosphooxymethyl)pyrimidine + 2 H(+) = thiamine phosphate + CO2 + diphosphate. The catalysed reaction is 2-(2-carboxy-4-methylthiazol-5-yl)ethyl phosphate + 4-amino-2-methyl-5-(diphosphooxymethyl)pyrimidine + 2 H(+) = thiamine phosphate + CO2 + diphosphate. It catalyses the reaction 4-methyl-5-(2-phosphooxyethyl)-thiazole + 4-amino-2-methyl-5-(diphosphooxymethyl)pyrimidine + H(+) = thiamine phosphate + diphosphate. It functions in the pathway cofactor biosynthesis; thiamine diphosphate biosynthesis; thiamine phosphate from 4-amino-2-methyl-5-diphosphomethylpyrimidine and 4-methyl-5-(2-phosphoethyl)-thiazole: step 1/1. Its function is as follows. Condenses 4-methyl-5-(beta-hydroxyethyl)thiazole monophosphate (THZ-P) and 2-methyl-4-amino-5-hydroxymethyl pyrimidine pyrophosphate (HMP-PP) to form thiamine monophosphate (TMP). In Bordetella parapertussis (strain 12822 / ATCC BAA-587 / NCTC 13253), this protein is Thiamine-phosphate synthase.